The primary structure comprises 232 residues: Orotidine 5'-phosphate decarboxylase (232 aa).

Residues aspartate 12, lysine 34, 61-70 (DMKLLDIDNT), threonine 116, arginine 177, glutamine 186, glycine 206, and arginine 207 contribute to the substrate site. Lysine 63 serves as the catalytic Proton donor.

Belongs to the OMP decarboxylase family. Type 1 subfamily. Homodimer.

The enzyme catalyses orotidine 5'-phosphate + H(+) = UMP + CO2. It participates in pyrimidine metabolism; UMP biosynthesis via de novo pathway; UMP from orotate: step 2/2. Its function is as follows. Catalyzes the decarboxylation of orotidine 5'-monophosphate (OMP) to uridine 5'-monophosphate (UMP). The sequence is that of Orotidine 5'-phosphate decarboxylase from Sinorhizobium medicae (strain WSM419) (Ensifer medicae).